We begin with the raw amino-acid sequence, 351 residues long: Alcohol dehydrogenase 2 (351 aa).

Residues Cys-47, His-70, Cys-101, Cys-104, Cys-107, Cys-115, and Cys-157 each coordinate Zn(2+). NAD(+) contacts are provided by residues Gly-181 to Gly-187, Asp-205, Lys-210, Val-272 to Leu-274, and Arg-344.

Belongs to the zinc-containing alcohol dehydrogenase family. Homotetramer. Zn(2+) is required as a cofactor.

It carries out the reaction a secondary alcohol + NAD(+) = a ketone + NADH + H(+). Functionally, versatile oxidoreductase that catalyzes the oxidation and reduction of a broad range of substrates. Preferentially oxidizes secondary alcohols. Has highest activity for racemic 2-octanol. Is also an efficient reductase for selected substrates. Substrate selectivity was found for medium chain lipophilic ketones. Has highest activities for 2-octanone, 2-nonanone and 2-decanone. The enzyme is (S)-selective in the reduction direction and produces exclusively the (S)-enantiomer. The polypeptide is Alcohol dehydrogenase 2 (ADH2) (Yarrowia lipolytica (strain CLIB 122 / E 150) (Yeast)).